A 302-amino-acid polypeptide reads, in one-letter code: Cuticle collagen dpy-13 (302 aa).

3 triple-helical region regions span residues 106 to 135 (GPQG…PGKA), 154 to 210 (GPPG…EGLP), and 219 to 278 (GEPG…PGTP). Residues 108–284 (QGAPGAPGKP…PGTPGERGIC (177 aa)) form a disordered region. The span at 144 to 159 (TPPPCKPCPQGPPGAP) shows a compositional bias: pro residues. The segment covering 188 to 197 (PKGPNGAPGK) has biased composition (low complexity). 2 stretches are compositionally biased toward pro residues: residues 247–257 (QPGPKGPPGPD) and 268–277 (QPGPVGPPGT).

It belongs to the cuticular collagen family. In terms of assembly, collagen polypeptide chains are complexed within the cuticle by disulfide bonds and other types of covalent cross-links.

Its function is as follows. Nematode cuticles are composed largely of collagen-like proteins. The cuticle functions both as an exoskeleton and as a barrier to protect the worm from its environment. Mutations in dpy-13 affects the body shape. This chain is Cuticle collagen dpy-13 (dpy-13), found in Caenorhabditis elegans.